Consider the following 441-residue polypeptide: 4-hydroxybenzoate polyprenyltransferase, mitochondrial (441 aa).

A mitochondrion-targeting transit peptide spans 1-95 (MLRKLTSNSS…TLGELVLRDY (95 aa)). Helical transmembrane passes span 129–149 (IGSW…APAG), 154–174 (LWTL…GCTI), 204–224 (AWFF…ELNW), 225–245 (YSIV…LMKR), 246–266 (ITHW…LLGW), 271–291 (GSVM…WTIV), 322–342 (LWLS…GMVC), and 378–398 (FISN…GTLY). Positions 405–441 (AGKSSTTSSSSTSSSSSPSSGLLLAATNHHQPARQAS) are disordered. Over residues 408–424 (SSTTSSSSTSSSSSPSS) the composition is skewed to low complexity. Over residues 432-441 (NHHQPARQAS) the composition is skewed to polar residues.

The protein belongs to the UbiA prenyltransferase family. Mg(2+) is required as a cofactor.

The protein resides in the mitochondrion inner membrane. It catalyses the reaction an all-trans-polyprenyl diphosphate + 4-hydroxybenzoate = a 4-hydroxy-3-(all-trans-polyprenyl)benzoate + diphosphate. It functions in the pathway cofactor biosynthesis; ubiquinone biosynthesis. In terms of biological role, catalyzes the prenylation of para-hydroxybenzoate (PHB) with an all-trans polyprenyl group. Mediates the second step in the final reaction sequence of coenzyme Q (CoQ) biosynthesis, which is the condensation of the polyisoprenoid side chain with PHB, generating the first membrane-bound Q intermediate. This is 4-hydroxybenzoate polyprenyltransferase, mitochondrial from Aedes aegypti (Yellowfever mosquito).